The primary structure comprises 213 residues: Phosphoenolpyruvate guanylyltransferase (213 aa).

The phosphoenolpyruvate site is built by Thr-146, Gly-161, and Ser-164.

The protein belongs to the CofC family.

The enzyme catalyses phosphoenolpyruvate + GTP + H(+) = enolpyruvoyl-2-diphospho-5'-guanosine + diphosphate. It functions in the pathway cofactor biosynthesis; coenzyme F420 biosynthesis. Guanylyltransferase that catalyzes the activation of phosphoenolpyruvate (PEP) as enolpyruvoyl-2-diphospho-5'-guanosine, via the condensation of PEP with GTP. It is involved in the biosynthesis of coenzyme F420, a hydride carrier cofactor. The chain is Phosphoenolpyruvate guanylyltransferase from Mycolicibacterium vanbaalenii (strain DSM 7251 / JCM 13017 / BCRC 16820 / KCTC 9966 / NRRL B-24157 / PYR-1) (Mycobacterium vanbaalenii).